A 463-amino-acid chain; its full sequence is Ribosomal protein uS12 methylthiotransferase RimO (463 aa).

One can recognise an MTTase N-terminal domain in the interval P15 to P130. C24, C60, C89, C161, C165, and C168 together coordinate [4Fe-4S] cluster. The 246-residue stretch at L147–A392 folds into the Radical SAM core domain. The 69-residue stretch at A395–V463 folds into the TRAM domain.

This sequence belongs to the methylthiotransferase family. RimO subfamily. [4Fe-4S] cluster is required as a cofactor.

The protein localises to the cytoplasm. The enzyme catalyses L-aspartate(89)-[ribosomal protein uS12]-hydrogen + (sulfur carrier)-SH + AH2 + 2 S-adenosyl-L-methionine = 3-methylsulfanyl-L-aspartate(89)-[ribosomal protein uS12]-hydrogen + (sulfur carrier)-H + 5'-deoxyadenosine + L-methionine + A + S-adenosyl-L-homocysteine + 2 H(+). Its function is as follows. Catalyzes the methylthiolation of an aspartic acid residue of ribosomal protein uS12. The protein is Ribosomal protein uS12 methylthiotransferase RimO of Burkholderia mallei (strain NCTC 10229).